A 267-amino-acid polypeptide reads, in one-letter code: Glutamate racemase (267 aa).

Residues 13-14 (DS) and 45-46 (YG) contribute to the substrate site. C77 (proton donor/acceptor) is an active-site residue. 78-79 (NT) is a substrate binding site. C192 (proton donor/acceptor) is an active-site residue. 193–194 (TH) provides a ligand contact to substrate.

It belongs to the aspartate/glutamate racemases family.

The catalysed reaction is L-glutamate = D-glutamate. It functions in the pathway cell wall biogenesis; peptidoglycan biosynthesis. Provides the (R)-glutamate required for cell wall biosynthesis. In Sinorhizobium fredii (strain NBRC 101917 / NGR234), this protein is Glutamate racemase.